A 321-amino-acid chain; its full sequence is Large ribosomal subunit protein uL10 (321 aa).

The disordered stretch occupies residues 284 to 321 (SAGTAPTGGGAAAAAVEEKKEEPEEESDDDIGFSLFDD). Residues 306–321 (PEEESDDDIGFSLFDD) show a composition bias toward acidic residues.

Belongs to the universal ribosomal protein uL10 family. In terms of assembly, P0 forms a pentameric complex by interaction with dimers of P1 and P2. Post-translationally, phosphorylated.

In terms of biological role, ribosomal protein P0 is the functional equivalent of E.coli protein L10. This chain is Large ribosomal subunit protein uL10, found in Oxybasis rubra (Red goosefoot).